We begin with the raw amino-acid sequence, 521 residues long: Vang-like protein 2 (521 aa).

Residues 1-81 (MDTESQYSGY…TTVVTGTSEH (81 aa)) form a disordered region. Over 1–108 (MDTESQYSGY…VPLDCSRHLG (108 aa)) the chain is Cytoplasmic. Positions 15-33 (GHSRSSRKHRDRRDRHRSK) are enriched in basic residues. Residues 57-67 (ESTRGDERDDN) are compositionally biased toward basic and acidic residues. Positions 69–81 (GETTTVVTGTSEH) are enriched in low complexity. The helical transmembrane segment at 109 to 129 (VAAGAILALLSFLTPLAFLLL) threads the bilayer. Over 130-147 (PPLLWREELEPCGTACEG) the chain is Extracellular. Residues 148-168 (LFISVAFKLLILLLGSWALFF) traverse the membrane as a helical segment. Residues 169 to 178 (RRPKASLPRV) are Cytoplasmic-facing. The chain crosses the membrane as a helical span at residues 179-199 (FVLRALLMVLVFLLVISYWLF). The Extracellular portion of the chain corresponds to 200 to 217 (YGVRILDARERSYQGVVQ). Residues 218–238 (FAVSLVDALLFVHYLAVVLLE) traverse the membrane as a helical segment. Over 239-521 (LRQLQPQFTL…VMRLQSETSV (283 aa)) the chain is Cytoplasmic.

It belongs to the Vang family. Homodimer and heterodimer with Vangl1. Interacts through its C-terminal region with the N-terminal half of DVL1, DVL2 and DVL3. The PDZ domain of DVL1, DVL2 and DVL3 is required for the interaction. Variants Glu-255 and Asn-464 impair interaction with the DVL proteins. Also interacts with the PDZ domains of MAGI3, SCRIB/SCRB1 and FZD3. Interacts with PRICKLE3. In terms of tissue distribution, primarily expressed in the brain and epididymis. Not detected in the cochlea of Lp mice.

The protein resides in the cell membrane. Its function is as follows. Involved in the control of early morphogenesis and patterning of both axial midline structures and the development of neural plate. Plays a role in the regulation of planar cell polarity, particularly in the orientation of stereociliary bundles in the cochlea. Required for polarization and movement of myocardializing cells in the outflow tract and seems to act via RHOA signaling to regulate this process. Required for cell surface localization of FZD3 and FZD6 in the inner ear. In Mus musculus (Mouse), this protein is Vang-like protein 2 (Vangl2).